A 132-amino-acid polypeptide reads, in one-letter code: Homeobox protein HD-4 (132 aa).

A DNA-binding region (homeobox) is located at residues 29-88; the sequence is GLSGYRYKTHIQVYVLTKIFEITQYPSHDTRQNLAILLNMSPRTIQIWFQNSRSVSRGAA. Residues 82 to 101 form a disordered region; sequence SVSRGAAKKKVSKDNGPQEA.

It is found in the nucleus. The sequence is that of Homeobox protein HD-4 (HD-4) from Encephalitozoon cuniculi (strain GB-M1) (Microsporidian parasite).